Reading from the N-terminus, the 790-residue chain is Exocyst complex component SEC15A (790 aa).

A coiled-coil region spans residues 49-70; the sequence is LVHQLKNVARKKEAEIEDLCKT.

This sequence belongs to the SEC15 family. In terms of assembly, the exocyst complex is composed of SEC3, SEC5, SEC6, SEC8, SEC10, EXO70A1 and EXO84B.

The protein resides in the cytoplasm. The protein localises to the cytosol. Functionally, component of the exocyst complex involved in the docking of exocytic vesicles with fusion sites on the plasma membrane during regulated or polarized secretion. Involved in polarized cell growth and organ morphogenesis. During cytokinesis, involved in cell plate initiation, cell plate maturation and formation of new primary cell wall. The chain is Exocyst complex component SEC15A (SEC15A) from Arabidopsis thaliana (Mouse-ear cress).